The chain runs to 847 residues: Protein SEY1 (847 aa).

The Cytoplasmic portion of the chain corresponds to 1–720; it reads MSSGEPLSET…KRSIVQHVTQ (720 aa). The 236-residue stretch at 55-290 folds into the GB1/RHD3-type G domain; the sequence is GHNYHIVAVF…VENDIFKPEY (236 aa). Position 65–72 (65–72) interacts with GTP; sequence GSQSTGKS. The helical transmembrane segment at 721–741 threads the bilayer; it reads IPYYIYIIILLLGWNEFMAVV. Residues 742 to 744 are Lumenal-facing; it reads RNP. A helical membrane pass occupies residues 745-765; that stretch reads FTFSLAIILGASLYILYTMNL. At 766 to 847 the chain is on the cytoplasmic side; sequence LKPALTVTQR…VTSLNVVEEE (82 aa).

This sequence belongs to the TRAFAC class dynamin-like GTPase superfamily. GB1/RHD3 GTPase family. RHD3 subfamily.

The protein localises to the endoplasmic reticulum membrane. In terms of biological role, cooperates with the reticulon proteins and tubule-shaping DP1 family proteins to generate and maintain the structure of the tubular endoplasmic reticulum network. Has GTPase activity, which is required for its function in ER organization. In Lodderomyces elongisporus (strain ATCC 11503 / CBS 2605 / JCM 1781 / NBRC 1676 / NRRL YB-4239) (Yeast), this protein is Protein SEY1.